The sequence spans 272 residues: MPELPEVETVRRELEKRIVGQKIVSIEATYPRMVLTGFEQLKKELTGKTIHGISRRGKYLIFEIGEKDRLISHLRMEGKYRLASLNVPMEKHDHLALKFTDEQLIYADVRKFGTWELISTDQVLPYFLKKNIGPEPTYETFDEQIFREKLQKSTKKIKPFLLEQTLVAGLGNIYVDEVLWLAKIHPEKVANQLTESSIHLLHDSIIEILQKAIKLGGSSIRTYSALGSTGKMQDELRVYGKTGEKCVRCGNEIQKIKVAGRGTHFCPFCQQK.

Pro2 functions as the Schiff-base intermediate with DNA in the catalytic mechanism. The active-site Proton donor is the Glu3. Residue Lys58 is the Proton donor; for beta-elimination activity of the active site. His92 and Arg110 together coordinate DNA. The FPG-type zinc finger occupies 237–271 (RVYGKTGEKCVRCGNEIQKIKVAGRGTHFCPFCQQ). Arg261 acts as the Proton donor; for delta-elimination activity in catalysis.

This sequence belongs to the FPG family. In terms of assembly, monomer. Requires Zn(2+) as cofactor.

It carries out the reaction Hydrolysis of DNA containing ring-opened 7-methylguanine residues, releasing 2,6-diamino-4-hydroxy-5-(N-methyl)formamidopyrimidine.. The catalysed reaction is 2'-deoxyribonucleotide-(2'-deoxyribose 5'-phosphate)-2'-deoxyribonucleotide-DNA = a 3'-end 2'-deoxyribonucleotide-(2,3-dehydro-2,3-deoxyribose 5'-phosphate)-DNA + a 5'-end 5'-phospho-2'-deoxyribonucleoside-DNA + H(+). Involved in base excision repair of DNA damaged by oxidation or by mutagenic agents. Acts as a DNA glycosylase that recognizes and removes damaged bases. Has a preference for oxidized purines, such as 7,8-dihydro-8-oxoguanine (8-oxoG). Has AP (apurinic/apyrimidinic) lyase activity and introduces nicks in the DNA strand. Cleaves the DNA backbone by beta-delta elimination to generate a single-strand break at the site of the removed base with both 3'- and 5'-phosphates. This Lactococcus lactis subsp. lactis (strain IL1403) (Streptococcus lactis) protein is Formamidopyrimidine-DNA glycosylase (mutM).